Here is a 426-residue protein sequence, read N- to C-terminus: D-tagatose-1,6-bisphosphate aldolase subunit KbaZ (426 aa).

It belongs to the GatZ/KbaZ family. KbaZ subfamily. In terms of assembly, forms a complex with KbaY.

Its pathway is carbohydrate metabolism; D-tagatose 6-phosphate degradation; D-glyceraldehyde 3-phosphate and glycerone phosphate from D-tagatose 6-phosphate: step 2/2. Component of the tagatose-1,6-bisphosphate aldolase KbaYZ that is required for full activity and stability of the Y subunit. Could have a chaperone-like function for the proper and stable folding of KbaY. When expressed alone, KbaZ does not show any aldolase activity. This chain is D-tagatose-1,6-bisphosphate aldolase subunit KbaZ, found in Escherichia coli O6:H1 (strain CFT073 / ATCC 700928 / UPEC).